We begin with the raw amino-acid sequence, 637 residues long: Limonene/alpha-pinene synthase, chloroplastic (637 aa).

A chloroplast-targeting transit peptide spans 1–56 (MALLSIVSLQVPKSCGLKSLISSSNVQKALCISTAVPTLRMRRRQKALVINMKLTT). Asp388, Asp392, and Asp540 together coordinate Mg(2+). The DDXXD motif motif lies at 388-392 (DDMYD).

Belongs to the terpene synthase family. Tpsd subfamily. Mg(2+) serves as cofactor. It depends on Mn(2+) as a cofactor. Requires K(+) as cofactor.

It is found in the plastid. It localises to the chloroplast. It catalyses the reaction (2E)-geranyl diphosphate = (4S)-limonene + diphosphate. The catalysed reaction is (2E)-geranyl diphosphate = (1S,5S)-alpha-pinene + diphosphate. The protein operates within terpene metabolism; oleoresin biosynthesis. Functionally, involved in defensive oleoresin formation in conifers in response to insect attack or other injury. Involved in monoterpene (C10) olefins biosynthesis. The sequence is that of Limonene/alpha-pinene synthase, chloroplastic (ag11) from Abies grandis (Grand fir).